The chain runs to 296 residues: Myeloid differentiation primary response protein MyD88 (296 aa).

The Death domain occupies 54–109 (MGFEYLEIRELETRPDPTRSLLDAWQGRSGASVGRLLELLALLDREDILKELKSRI). The segment at 110–155 (EEDCQKYLGKQQNQESEKPLQVARVESSVPQTKELGGITTLDDPLG) is intermediate domain. Residues 159–293 (ELFDAFICYC…WFWTRLAKAL (135 aa)) enclose the TIR domain. S244 carries the phosphoserine modification.

Homodimer. Also forms heterodimers with TIRAP. Binds to TLR2, TLR4, IRAK1, IRAK2 and IRAK4 via their respective TIR domains. Interacts with IL18R1. Interacts with BMX, IL1RL1, IKBKE and IRF7. Interacts with LRRFIP1 and LRRFIP2; this interaction positively regulates Toll-like receptor (TLR) signaling in response to agonist. Interacts with FLII. LRRFIP1 and LRRFIP2 compete with FLII for MYD88-binding. Interacts with IRF1. Upon IL1B treatment, forms a complex with PELI1, IRAK1, IRAK4 and TRAF6; this complex recruits MAP3K7/TAK1, TAB1 and TAB2 to mediate NF-kappa-B activation. Direct binding of SMAD6 to PELI1 prevents the complex formation and hence negatively regulates IL1R-TLR signaling and eventually NF-kappa-B-mediated gene expression. May interact with PIK3AP1. Interacts (via TIR domain) with DHX9 (via H2A and OB-fold regions); this interaction is direct. Interacts with OTUD4 deubiquitinase; the interaction is direct. Post-translationally, ubiquitinated; undergoes 'Lys-63'-linked polyubiquitination. OTUD4 specifically hydrolyzes 'Lys-63'-linked polyubiquitinated MYD88. Deubiquitinated by USP3 that cleaves 'Lys-63'-linked ubiquitin chains leading to inhibition of MYD88-induced NF-kappa-B signaling. Detected in bone marrow. Isoform 1 is expressed in testis, kidney, lung, ovary, adrenal gland, provstate, thymus and heart, and weakly in skeletal muscle, liver, spleen and brain. Isoform 2 is mainly expressed in the spleen and weakly in brain.

It is found in the cytoplasm. The protein resides in the nucleus. Functionally, adapter protein involved in the Toll-like receptor and IL-1 receptor signaling pathway in the innate immune response. Acts via IRAK1, IRAK2, IRF7 and TRAF6, leading to NF-kappa-B activation, cytokine secretion and the inflammatory response. Increases IL-8 transcription. Involved in IL-18-mediated signaling pathway. Activates IRF1 resulting in its rapid migration into the nucleus to mediate an efficient induction of IFN-beta, NOS2/INOS, and IL12A genes. Upon TLR8 activation by GU-rich single-stranded RNA (GU-rich RNA) derived from viruses, induces IL1B release through NLRP3 inflammasome activation. MyD88-mediated signaling in intestinal epithelial cells is crucial for maintenance of gut homeostasis and controls the expression of the antimicrobial lectin REG3G in the small intestine. Mediates leukocyte recruitment at the inflammatory site. Its function is as follows. Defective in its ability to induce IRAK phosphorylation and NF-kappa-B activation and can function as a negative regulator of activation by IL-1 or lipopolysaccharide (LPS). In Mus musculus (Mouse), this protein is Myeloid differentiation primary response protein MyD88.